Here is a 421-residue protein sequence, read N- to C-terminus: UDP-N-acetylglucosamine 1-carboxyvinyltransferase (421 aa).

Residue 22–23 participates in phosphoenolpyruvate binding; it reads KN. UDP-N-acetyl-alpha-D-glucosamine is bound at residue Arg92. Asp116 functions as the Proton donor in the catalytic mechanism. UDP-N-acetyl-alpha-D-glucosamine-binding positions include 121-125, Asp307, and Ile330; that span reads RPIDQ.

The protein belongs to the EPSP synthase family. MurA subfamily.

It is found in the cytoplasm. It carries out the reaction phosphoenolpyruvate + UDP-N-acetyl-alpha-D-glucosamine = UDP-N-acetyl-3-O-(1-carboxyvinyl)-alpha-D-glucosamine + phosphate. The protein operates within cell wall biogenesis; peptidoglycan biosynthesis. Functionally, cell wall formation. Adds enolpyruvyl to UDP-N-acetylglucosamine. This is UDP-N-acetylglucosamine 1-carboxyvinyltransferase from Lactobacillus johnsonii (strain CNCM I-12250 / La1 / NCC 533).